The chain runs to 162 residues: Cytochrome c-type biogenesis protein CcmE (162 aa).

The Cytoplasmic segment spans residues Met-1–Arg-7. Residues Leu-8 to Ala-28 form a helical; Signal-anchor for type II membrane protein membrane-spanning segment. Residues Leu-29 to Gln-162 are Periplasmic-facing. His-122 and Tyr-126 together coordinate heme. The tract at residues Gln-138–Gln-162 is disordered.

The protein belongs to the CcmE/CycJ family.

It is found in the cell inner membrane. Its function is as follows. Heme chaperone required for the biogenesis of c-type cytochromes. Transiently binds heme delivered by CcmC and transfers the heme to apo-cytochromes in a process facilitated by CcmF and CcmH. The chain is Cytochrome c-type biogenesis protein CcmE from Nitrobacter hamburgensis (strain DSM 10229 / NCIMB 13809 / X14).